Consider the following 949-residue polypeptide: Leucine--tRNA ligase (949 aa).

Residues 68 to 79 (PYPSGEGLHVGH) carry the 'HIGH' region motif. Residues 540–562 (VPDYSPVSFDPDDAGSEPSPPLG) are disordered. The 'KMSKS' region signature appears at 722–726 (KIGKS). Lysine 725 contacts ATP.

Belongs to the class-I aminoacyl-tRNA synthetase family.

It localises to the cytoplasm. The catalysed reaction is tRNA(Leu) + L-leucine + ATP = L-leucyl-tRNA(Leu) + AMP + diphosphate. This chain is Leucine--tRNA ligase, found in Mycolicibacterium gilvum (strain PYR-GCK) (Mycobacterium gilvum (strain PYR-GCK)).